The chain runs to 170 residues: MARIGLYPGTFDPMTNGHLDIIRRGLKLVDHLIVAIGVNATKTPLLTLEERFQLIEQEAGPIAKELGSKISTASFSGLVVNAADEHGATVILRGLRGAVDFEYETQMVGMNRVMNPHVETVFLAASPDTQFISSTLVRQIAGMDGDISPFVPPHVKAKVLARVAEQKKSR.

Position 10 (Thr-10) interacts with substrate. Residues 10-11 (TF) and His-18 each bind ATP. Substrate-binding residues include Lys-42, Val-79, and Arg-93. Residues 94 to 96 (GLR), Glu-104, and 129 to 135 (TQFISST) contribute to the ATP site.

This sequence belongs to the bacterial CoaD family. As to quaternary structure, homohexamer. Mg(2+) is required as a cofactor.

Its subcellular location is the cytoplasm. It catalyses the reaction (R)-4'-phosphopantetheine + ATP + H(+) = 3'-dephospho-CoA + diphosphate. It functions in the pathway cofactor biosynthesis; coenzyme A biosynthesis; CoA from (R)-pantothenate: step 4/5. Its function is as follows. Reversibly transfers an adenylyl group from ATP to 4'-phosphopantetheine, yielding dephospho-CoA (dPCoA) and pyrophosphate. In Parvibaculum lavamentivorans (strain DS-1 / DSM 13023 / NCIMB 13966), this protein is Phosphopantetheine adenylyltransferase.